Consider the following 328-residue polypeptide: Probable fused nickel transport protein LarMN (328 aa).

A run of 8 helical transmembrane segments spans residues 8–28 (LSPA…TVAV), 42–62 (LPML…NLPI), 75–95 (LLAV…TLLL), 103–123 (GGIL…PFVG), 138–158 (LGLA…AGIE), 187–207 (MLTA…LLVF), 229–249 (PWIA…LASN), and 296–316 (PVSV…LLLI).

Belongs to the CbiM family. NikM subfamily. As to quaternary structure, may form an energy-coupling factor (ECF) transporter complex composed of an ATP-binding protein (A component, LarO), a transmembrane protein (T component, LarQ) and a fused possible substrate-capture protein (S component, LarMN) of unknown stoichiometry.

Its subcellular location is the cell membrane. Probably part of the energy-coupling factor (ECF) transporter complex LarMNQO involved in nickel import. The chain is Probable fused nickel transport protein LarMN from Lactiplantibacillus plantarum (strain ATCC BAA-793 / NCIMB 8826 / WCFS1) (Lactobacillus plantarum).